The chain runs to 1188 residues: DNA-directed RNA polymerase II subunit 2 (1188 aa).

Residue D800 coordinates Mg(2+). 2 disordered regions span residues 852-871 (SYDK…VSGE) and 877-897 (KTTP…TRRD). Over residues 879 to 892 (TPISQDEAQGQSSR) the composition is skewed to polar residues. Residues C1124, C1127, C1142, and C1145 each contribute to the Zn(2+) site. The C4-type zinc-finger motif lies at 1124–1145 (CEVCGLIAIANLKKNSFECRGC).

Belongs to the RNA polymerase beta chain family. Component of the RNA polymerase II complex consisting of at least 12 subunits.

It is found in the nucleus. It carries out the reaction RNA(n) + a ribonucleoside 5'-triphosphate = RNA(n+1) + diphosphate. DNA-dependent RNA polymerase catalyzes the transcription of DNA into RNA using the four ribonucleoside triphosphates as substrates. Second largest component of RNA polymerase II which synthesizes mRNA precursors and many functional non-coding RNAs. Proposed to contribute to the polymerase catalytic activity and forms the polymerase active center together with the largest subunit. Pol II is the central component of the basal RNA polymerase II transcription machinery. It is composed of mobile elements that move relative to each other. NRPB2 is part of the core element with the central large cleft, the clamp element that moves to open and close the cleft and the jaws that are thought to grab the incoming DNA template. Functionally, essential for the completion of the three rounds of mitosis in female megaspores required for the development of mature gametophytes. The sequence is that of DNA-directed RNA polymerase II subunit 2 (NRPB2) from Arabidopsis thaliana (Mouse-ear cress).